We begin with the raw amino-acid sequence, 218 residues long: Small ribosomal subunit protein uS3c (218 aa).

The 72-residue stretch at 47–118 (VQKNMRTSSG…KLNIAVTRIA (72 aa)) folds into the KH type-2 domain.

It belongs to the universal ribosomal protein uS3 family. As to quaternary structure, part of the 30S ribosomal subunit.

It is found in the plastid. The protein localises to the chloroplast. This is Small ribosomal subunit protein uS3c (rps3) from Solanum bulbocastanum (Wild potato).